A 160-amino-acid polypeptide reads, in one-letter code: Cyclic pyranopterin monophosphate synthase (160 aa).

Substrate-binding positions include 77–79 and 114–115; these read LCH and ME. The active site involves Asp-129.

This sequence belongs to the MoaC family. In terms of assembly, homohexamer; trimer of dimers.

The catalysed reaction is (8S)-3',8-cyclo-7,8-dihydroguanosine 5'-triphosphate = cyclic pyranopterin phosphate + diphosphate. It functions in the pathway cofactor biosynthesis; molybdopterin biosynthesis. Its function is as follows. Catalyzes the conversion of (8S)-3',8-cyclo-7,8-dihydroguanosine 5'-triphosphate to cyclic pyranopterin monophosphate (cPMP). This chain is Cyclic pyranopterin monophosphate synthase, found in Alcanivorax borkumensis (strain ATCC 700651 / DSM 11573 / NCIMB 13689 / SK2).